We begin with the raw amino-acid sequence, 306 residues long: UDP-3-O-acyl-N-acetylglucosamine deacetylase (306 aa).

His79, His238, and Asp242 together coordinate Zn(2+). Catalysis depends on His265, which acts as the Proton donor.

The protein belongs to the LpxC family. Zn(2+) serves as cofactor.

The enzyme catalyses a UDP-3-O-[(3R)-3-hydroxyacyl]-N-acetyl-alpha-D-glucosamine + H2O = a UDP-3-O-[(3R)-3-hydroxyacyl]-alpha-D-glucosamine + acetate. It participates in glycolipid biosynthesis; lipid IV(A) biosynthesis; lipid IV(A) from (3R)-3-hydroxytetradecanoyl-[acyl-carrier-protein] and UDP-N-acetyl-alpha-D-glucosamine: step 2/6. Catalyzes the hydrolysis of UDP-3-O-myristoyl-N-acetylglucosamine to form UDP-3-O-myristoylglucosamine and acetate, the committed step in lipid A biosynthesis. The protein is UDP-3-O-acyl-N-acetylglucosamine deacetylase of Shewanella violacea (strain JCM 10179 / CIP 106290 / LMG 19151 / DSS12).